A 946-amino-acid polypeptide reads, in one-letter code: MSEADAGARDESPSRTAEEPAAAMRIKEERRSSSVDVVDVGNGELLVLHSIFYQGKTLRLPGNRAHMYPVVFQMIKGVCSLVKQLVVAFPKGWDQNTPSISEIAALTKSFNRVAKPFASNWSGSYNTDTLKEWGEPNCSAEVAKAITTYAYECAVPRPADLNQHYKSFTSETYGETNPEQLISIIDELNIGPQDVFVDLGSGIGQLVCLTAAYAKCKKSVGIELSQVPSNFAQDLAGYFKKFMSHFGKNHGKFEHIQGDFLNPKFKQLICEEATVIFINNFAFDAALMLRINTELLQDLKHGTRIVTTKELGTNKKEITFRSTSDINAISHTTELKTTESAVSWTSSHVKFWLTTIDHTKLIKYYEDQRRRQEVKSSREGSEISDGRDMGLKKRKSQRESSVHPDKLQKTEQAAASSHQSPKWNEPDTDYTPPAKKPKKEKLLREQQDATPASSHHHGASSSSGKDREKEKEKKKNKIYEEKKVKTPKPPKSSSSRYSSETPTSHHHHHRSNSISHSSDVIRPSQPKATAPPPPLVPAPARATASTPPPAPPAARAQSPKREEPLEPPTDLIHHGGGQLDAKTMNALHTIREAATTSAQAAAIQDAINSVLSQPTEASPSAFGPPLAHLPAPVAIYPTPPPPPAPAPAAPQQASAAPAAPNVMPVCTEIAAEQRHTFMIPPTDPFYNMIVSYYFAMKQFCNQSKTADPEFVGRLRLDIEAEEARRAELKESITLTSTQIDELLATGVNTLKSRLDELGMPSVTDVTELLAGSKQIVTQHKGLTNTVAQMENSVAVEEQKLRLIGGPDAVRYFDEAMSHPNVDIAKLTDLVITTRPPNFVAQILLPDDSPTASIDSKVSPSSSSSRRPRQPKPRANNTAAGAGGGGKRGTSGGRKSDGGGGGGATEDVELEIRQFVQHALKVDNAVKEKERKARGNFMAAAADRIPR.

Positions 1–18 (MSEADAGARDESPSRTAE) are enriched in basic and acidic residues. The segment at 1–28 (MSEADAGARDESPSRTAEEPAAAMRIKE) is disordered. Positions 54–369 (QGKTLRLPGN…KLIKYYEDQR (316 aa)) constitute a DOT1 domain. Residues 173 to 176 (YGET), 196 to 205 (FVDLGSGIGQ), Glu-223, and 259 to 260 (DF) each bind S-adenosyl-L-methionine. The span at 368 to 409 (QRRRQEVKSSREGSEISDGRDMGLKKRKSQRESSVHPDKLQK) shows a compositional bias: basic and acidic residues. Disordered stretches follow at residues 368–577 (QRRR…HGGG) and 849–905 (PTAS…GATE). A compositionally biased stretch (polar residues) spans 410-422 (TEQAAASSHQSPK). The span at 464 to 484 (GKDREKEKEKKKNKIYEEKKV) shows a compositional bias: basic and acidic residues. Composition is skewed to low complexity over residues 491–502 (KSSSSRYSSETP), 512–528 (NSISHSSDVIRPSQPKA), and 855–864 (SKVSPSSSSS). Gly residues predominate over residues 880–903 (GAGGGGKRGTSGGRKSDGGGGGGA).

The protein belongs to the class I-like SAM-binding methyltransferase superfamily. DOT1 family. As to quaternary structure, interacts with zfp-1 (via C-terminus) to form a heterodimer known as the zfp-1-dot-1.1 complex or DotCom complex.

Its subcellular location is the nucleus. It is found in the chromosome. It catalyses the reaction L-lysyl(79)-[histone H3] + 3 S-adenosyl-L-methionine = N(6),N(6),N(6)-trimethyl-L-lysyl(79)-[histone H3] + 3 S-adenosyl-L-homocysteine + 3 H(+). Histone methyltransferase, which in complex with zfp-1, methylates 'Lys-79' of histone H3 to activate transcription. During stress, the zfp-1-dot-1.1 complex also plays a role in the deubiquitination of histone H2B sites, which negatively modulates the RNA polymerase II-induced transcription of highly expressed genes. Involved in controlling tissue-specific gene expression, particularly in the epidermis. This Caenorhabditis elegans protein is Histone-lysine N-methyltransferase, H3 lysine-79 specific.